A 324-amino-acid polypeptide reads, in one-letter code: Beta-ketoacyl-[acyl-carrier-protein] synthase III (324 aa).

Residues Cys112 and His249 contribute to the active site. The segment at 250–254 (QANRR) is ACP-binding. Asn279 is an active-site residue.

It belongs to the thiolase-like superfamily. FabH family. In terms of assembly, homodimer.

Its subcellular location is the cytoplasm. The enzyme catalyses malonyl-[ACP] + acetyl-CoA + H(+) = 3-oxobutanoyl-[ACP] + CO2 + CoA. The protein operates within lipid metabolism; fatty acid biosynthesis. Functionally, catalyzes the condensation reaction of fatty acid synthesis by the addition to an acyl acceptor of two carbons from malonyl-ACP. Catalyzes the first condensation reaction which initiates fatty acid synthesis and may therefore play a role in governing the total rate of fatty acid production. Possesses both acetoacetyl-ACP synthase and acetyl transacylase activities. Its substrate specificity determines the biosynthesis of branched-chain and/or straight-chain of fatty acids. The chain is Beta-ketoacyl-[acyl-carrier-protein] synthase III from Streptococcus pyogenes serotype M4 (strain MGAS10750).